We begin with the raw amino-acid sequence, 3814 residues long: Hybrid PKS-NRPS synthetase pyvA (3814 aa).

Positions 1 to 340 constitute a Ketosynthase family 3 (KS3) domain; that stretch reads MDPQQRLLLE…GSNAHVILES (340 aa). Active-site for beta-ketoacyl synthase activity residues include cysteine 87, histidine 222, and histidine 261. The tract at residues 441–758 is malonyl-CoA:ACP transacylase (MAT) domain; the sequence is VFTGQGAQWH…PYFASLSRGV (318 aa). The active-site For malonyltransferase activity is the serine 533. The N-terminal hotdog fold stretch occupies residues 835–970; it reads HPILGAKMPG…GLISISTATT (136 aa). The dehydratase (DH) domain stretch occupies residues 835–1149; the sequence is HPILGAKMPG…LRLTSLSNGR (315 aa). The 317-residue stretch at 835–1151 folds into the PKS/mFAS DH domain; it reads HPILGAKMPG…LTSLSNGRAA (317 aa). The Proton acceptor; for dehydratase activity role is filled by histidine 867. The segment at 970-993 is disordered; sequence TADGAPSRKPYRQHPQPQPGRMST. A C-terminal hotdog fold region spans residues 991–1151; sequence MSTASFPAQS…LTSLSNGRAA (161 aa). Aspartate 1057 serves as the catalytic Proton donor; for dehydratase activity. The segment at 1520–1836 is enoyl reductase (ER) domain; the sequence is GLLETLVWED…MGRHTGKVVL (317 aa). Residues 1864 to 2036 are ketoreductase (KR) domain; that stretch reads TYLLVGGLGG…PASSMNCGRI (173 aa). The region spanning 2141-2220 is the Carrier 1 domain; the sequence is IDLSDRVALL…ALVEKAIGLF (80 aa). At serine 2180 the chain carries O-(pantetheine 4'-phosphoryl)serine. Residues 2228–2238 show a composition bias toward low complexity; that stretch reads QQQQQSVQSSS. The tract at residues 2228-2270 is disordered; it reads QQQQQSVQSSSAPSNDDQSPTFNKNLDSQDPSTSLQIPKADCS. Residues 2239–2263 are compositionally biased toward polar residues; sequence APSNDDQSPTFNKNLDSQDPSTSLQ. Residues 2273 to 2718 form a condensation (C) domain 7 region; that stretch reads LPMSTFQNRL…PEVRLAGTLE (446 aa). The segment at 2738–3149 is adenylation (A) domain 8; the sequence is PLNLPRRIVE…DGQLEFLGRI (412 aa). Residues 3257 to 3304 are disordered; that stretch reads SGKTDRRALGASQAPGTPPQHGAGPAAASTLDPAQAQAQDRADEEVGD. The region spanning 3304–3379 is the Carrier 2 domain; sequence DRTMATVTRV…QLVELVHSKV (76 aa). Serine 3339 is modified (O-(pantetheine 4'-phosphoryl)serine). The tract at residues 3428 to 3680 is thioesterase (TE) domain; sequence MTGAESFTGI…VDLVPVNYLT (253 aa).

The protein in the C-terminal section; belongs to the NRP synthetase family.

Its pathway is secondary metabolite biosynthesis. Hybrid PKS-NRPS synthetase; part of the gene cluster that mediates the biosynthesis of pyranoviolin A, a pyranonigrin analog with a C-3 methoxy group. Initially, the PKS portion of pyvA synthesizes C-10 carbon chain from 5 molecules of malonyl-CoA, which is then condensed with the thiolation (T) domain-bound glycine activated by the adenylation (A) domain. The subsequent chain release by Dieckmann condensation (DKC) could be catalyzed by the TE domain present at the C-terminus of pyvA and/or the alpha/beta hydrolase pyvD, installing the tetramic acid moiety. The FAD-dependent monooxygenase pyvC next epoxidizes one of the olefins of the polyketide part, and the epoxide ring-opening induces the dihydro-gamma-pyrone ring formation. The cytochrome P450 monooxygeanse pyvB would be responsible for the 2 consecutive reactions, in which the dihydro-gamma-pyrone is oxidized to gamma-pyrone and C-7 is hydroxylated to yield pyranonigrin F. Finally, the O-methyltransferase pyvH methylates the C-3 hydroxy group to complete the biosynthesis. In Aspergillus violaceofuscus (strain CBS 115571), this protein is Hybrid PKS-NRPS synthetase pyvA.